Reading from the N-terminus, the 471-residue chain is Alpha-galactosidase 5 (471 aa).

A signal peptide spans 1 to 18; sequence MFAFYFLTACTTLKGVFG. Residues Cys42 and Cys74 are joined by a disulfide bond. Positions 72 and 73 each coordinate substrate. Asn105 is a glycosylation site (N-linked (GlcNAc...) asparagine). Cysteines 121 and 151 form a disulfide. Lys147 provides a ligand contact to substrate. Residue Asp149 is the Nucleophile of the active site. The N-linked (GlcNAc...) asparagine glycan is linked to Asn175. Arg205 contributes to the substrate binding site. The active-site Proton donor is Asp209. Disulfide bonds link Cys221–Cys237 and Cys223–Cys230. Gln251 contributes to the substrate binding site. Residues Asn270, Asn370, Asn403, Asn422, Asn435, and Asn454 are each glycosylated (N-linked (GlcNAc...) asparagine).

Belongs to the glycosyl hydrolase 27 family. As to quaternary structure, homotetramer.

The protein resides in the secreted. The enzyme catalyses Hydrolysis of terminal, non-reducing alpha-D-galactose residues in alpha-D-galactosides, including galactose oligosaccharides, galactomannans and galactolipids.. The polypeptide is Alpha-galactosidase 5 (MEL5) (Saccharomyces cerevisiae (Baker's yeast)).